We begin with the raw amino-acid sequence, 222 residues long: Phosphoribosylformylglycinamidine synthase subunit PurQ (222 aa).

Positions 3-222 (SAVVLLPGLN…LFEGALGIAA (220 aa)) constitute a Glutamine amidotransferase type-1 domain. The active-site Nucleophile is cysteine 86. Active-site residues include histidine 196 and glutamate 198.

As to quaternary structure, part of the FGAM synthase complex composed of 1 PurL, 1 PurQ and 2 PurS subunits.

The protein localises to the cytoplasm. It catalyses the reaction N(2)-formyl-N(1)-(5-phospho-beta-D-ribosyl)glycinamide + L-glutamine + ATP + H2O = 2-formamido-N(1)-(5-O-phospho-beta-D-ribosyl)acetamidine + L-glutamate + ADP + phosphate + H(+). The enzyme catalyses L-glutamine + H2O = L-glutamate + NH4(+). It participates in purine metabolism; IMP biosynthesis via de novo pathway; 5-amino-1-(5-phospho-D-ribosyl)imidazole from N(2)-formyl-N(1)-(5-phospho-D-ribosyl)glycinamide: step 1/2. Part of the phosphoribosylformylglycinamidine synthase complex involved in the purines biosynthetic pathway. Catalyzes the ATP-dependent conversion of formylglycinamide ribonucleotide (FGAR) and glutamine to yield formylglycinamidine ribonucleotide (FGAM) and glutamate. The FGAM synthase complex is composed of three subunits. PurQ produces an ammonia molecule by converting glutamine to glutamate. PurL transfers the ammonia molecule to FGAR to form FGAM in an ATP-dependent manner. PurS interacts with PurQ and PurL and is thought to assist in the transfer of the ammonia molecule from PurQ to PurL. This Mesorhizobium japonicum (strain LMG 29417 / CECT 9101 / MAFF 303099) (Mesorhizobium loti (strain MAFF 303099)) protein is Phosphoribosylformylglycinamidine synthase subunit PurQ.